Consider the following 465-residue polypeptide: Zinc finger CCCH domain-containing protein 58 (465 aa).

The disordered stretch occupies residues Met-1–Glu-26. 3 consecutive C3H1-type zinc fingers follow at residues Arg-51–Asn-79, Arg-97–Gln-125, and Arg-145–Pro-173. Disordered regions lie at residues Pro-173–Gln-200 and Leu-274–Glu-302. Residues Gln-177–Pro-191 are compositionally biased toward low complexity. The segment covering Ser-283–Pro-298 has biased composition (polar residues). C3H1-type zinc fingers lie at residues Arg-300–Glu-328 and Arg-345–Gly-373. Positions Ser-397–Thr-431 are enriched in low complexity. The interval Ser-397 to Ser-465 is disordered. Over residues Ser-444–Lys-453 the composition is skewed to basic and acidic residues. Over residues Gly-454 to Ser-465 the composition is skewed to polar residues.

It is found in the nucleus. The polypeptide is Zinc finger CCCH domain-containing protein 58 (Arabidopsis thaliana (Mouse-ear cress)).